A 453-amino-acid chain; its full sequence is Gamma-aminobutyric acid receptor subunit alpha-6 (453 aa).

Residues 1-19 form the signal peptide; that stretch reads MVLLLPWLFIILWLENAQA. Topologically, residues 20–243 are extracellular; that stretch reads QLEDEGNFYS…FHLQRKMGYF (224 aa). An N-linked (GlcNAc...) asparagine glycan is attached at asparagine 31. Arginine 84 is a 4-aminobutanoate binding site. Asparagine 128 and asparagine 141 each carry an N-linked (GlcNAc...) asparagine glycan. Residue threonine 147 participates in 4-aminobutanoate binding. Cysteine 156 and cysteine 170 are disulfide-bonded. The chain crosses the membrane as a helical span at residues 244–264; it reads MIQIYTPCIMTVILSQVSFWI. The Cytoplasmic portion of the chain corresponds to 265 to 270; the sequence is NKESVP. Residues 271-290 form a helical membrane-spanning segment; sequence ARTVFGITTVLTMTTLSISA. Residues 291-304 are Extracellular-facing; the sequence is RHSLPKVSYATAMD. The helical transmembrane segment at 305–325 threads the bilayer; it reads WFIAVCFAFVFSALIEFAAVN. The Cytoplasmic portion of the chain corresponds to 326–422; sequence YFTNLQSQKA…GTSKIDQYSR (97 aa). Serine 375 carries the phosphoserine modification. Residues 423–443 form a helical membrane-spanning segment; that stretch reads ILFPVAFAGFNLVYWIVYLSK. Residues 444-453 are Extracellular-facing; sequence DTMEVSSTVE.

It belongs to the ligand-gated ion channel (TC 1.A.9) family. Gamma-aminobutyric acid receptor (TC 1.A.9.5) subfamily. GABRA6 sub-subfamily. Heteropentamer, formed by a combination of alpha (GABRA1-6), beta (GABRB1-3), gamma (GABRG1-3), delta (GABRD), epsilon (GABRE), rho (GABRR1-3), pi (GABRP) and theta (GABRQ) chains, each subunit exhibiting distinct physiological and pharmacological properties. Binds UBQLN1. Expressed in brain, in cerebellar granule cells.

The protein resides in the postsynaptic cell membrane. It localises to the cell membrane. The enzyme catalyses chloride(in) = chloride(out). Functionally, alpha subunit of the heteropentameric ligand-gated chloride channel gated by gamma-aminobutyric acid (GABA), a major inhibitory neurotransmitter in the brain. GABA-gated chloride channels, also named GABA(A) receptors (GABAAR), consist of five subunits arranged around a central pore and contain GABA active binding site(s) located at the alpha and beta subunit interface(s). When activated by GABA, GABAARs selectively allow the flow of chloride anions across the cell membrane down their electrochemical gradient. Alpha-6/GABRA6 subunits are found at both synaptic and extrasynaptic sites. Chloride influx into the postsynaptic neuron following GABAAR opening decreases the neuron ability to generate a new action potential, thereby reducing nerve transmission. Extrasynaptic alpha-6-containing receptors contribute to the tonic GABAergic inhibition. Alpha-6 subunits are also present on glutamatergic synapses. This Mus musculus (Mouse) protein is Gamma-aminobutyric acid receptor subunit alpha-6.